Reading from the N-terminus, the 755-residue chain is Zinc transporter ZIP6 (755 aa).

The signal sequence occupies residues 1-28 (MARKLSVILILTFALSVTNPLHELKAAA). Residues 29–325 (FPQTTEKISP…PKTYSLQIAW (297 aa)) lie on the Extracellular side of the membrane. Asn-67 is a glycosylation site (N-linked (GlcNAc...) asparagine). A compositionally biased stretch (basic and acidic residues) spans 95–128 (DHDHHSDHEHHSDHERHSDHEHHSEHEHHSDHDH). Disordered regions lie at residues 95-186 (DHDH…SASE) and 202-246 (LETI…SVSE). Residues 129-144 (HSHHNHAASGKNKRKA) are compositionally biased toward basic residues. 2 stretches are compositionally biased toward basic and acidic residues: residues 145–159 (LCPD…KDPR) and 167–179 (HRPE…RNVK). Positions 219–234 (SSSTPPSVTSKSRVSR) are enriched in low complexity. 3 N-linked (GlcNAc...) asparagine glycosylation sites follow: Asn-241, Asn-266, and Asn-283. The chain crosses the membrane as a helical span at residues 326–346 (VGGFIAISIISFLSLLGVILV). Residues 347–355 (PLMNRVFFK) lie on the Cytoplasmic side of the membrane. A helical transmembrane segment spans residues 356–376 (FLLSFLVALAVGTLSGDAFLH). Residues 377–423 (LLPHSHASHHHSHSHEEPAMEMKRGPLFSHLSSQNIEESAYFDSTWK) lie on the Extracellular side of the membrane. Residues 424-444 (GLTALGGLYFMFLVEHVLTLI) form a helical membrane-spanning segment. The Cytoplasmic segment spans residues 445–657 (KQFKDKKKKN…LKAGMTVKQA (213 aa)). A coiled-coil region spans residues 464-480 (VEIKKQLSKYESQLSTN). 2 positions are modified to phosphoserine: Ser-471 and Ser-478. The helical transmembrane segment at 658-678 (VLYNALSAMLAYLGMATGIFI) threads the bilayer. The Extracellular segment spans residues 679–686 (GHYAENVS). The N-linked (GlcNAc...) asparagine glycan is linked to Asn-684. A helical membrane pass occupies residues 687-707 (MWIFALTAGLFMYVALVDMVP). The Cytoplasmic portion of the chain corresponds to 708–724 (EMLHNDASDHGCSRWGY). Residues 725 to 745 (FFLQNAGMLLGFGIMLLISIF) traverse the membrane as a helical segment. The Extracellular portion of the chain corresponds to 746–755 (EHKIVFRINF).

It belongs to the ZIP transporter (TC 2.A.5) family. In terms of assembly, interacts with SLC39A10; which triggers cells to undergo EMT and mitosis. Found in a complex with SLC39A6, SLC39A10 and with the 'Ser-727' phosphorylated form of STAT3 throughout mitosis. Found in a complex with SLC39A6, SLC39A10 and with NCAM1; this complex controls NCAM1 phosphorylation and integration into focal adhesion complexes during epithelial-to-mesenchymal transition (EMT). Found in a complex with SLC39A6, SLC39A10 and with GSK3B that controls NCAM1 phosphorylation. In terms of processing, cleaved on the N-terminus before locating to the plasma membrane. N-glycosylated. Post-translationally, phosphorylated by ZAP70 in response to TCR stimulation leading to its activation. In terms of tissue distribution, highly expressed in the breast, prostate, placenta, kidney, pituitary and corpus callosum. Weakly expressed in heart and intestine. Also highly expressed in cells derived from an adenocarcinoma of the cervix and lung carcinoma.

It is found in the cell membrane. The protein resides in the cell projection. The protein localises to the lamellipodium membrane. It localises to the membrane raft. Its subcellular location is the apical cell membrane. It catalyses the reaction Zn(2+)(in) = Zn(2+)(out). Zinc-influx transporter which plays a role in zinc homeostasis and in the induction of epithelial-to-mesenchymal transition (EMT). When associated with SLC39A10, the heterodimer formed by SLC39A10 and SLC39A6 mediates cellular zinc uptake to trigger cells to undergo epithelial- to-mesenchymal transition (EMT). The SLC39A10-SLC39A6 heterodimer also controls NCAM1 phosphorylation and its integration into focal adhesion complexes during EMT. Zinc influx inactivates GSK3B, enabling unphosphorylated SNAI1 in the nucleus to down-regulate adherence genes such as CDH1, causing loss of cell adherence. In addition, the SLC39A10-SLC39A6 heterodimer plays an essentiel role in initiating mitosis by importing zinc into cells to initiate a pathway resulting in the onset of mitosis. Participates in the T-cell receptor signaling regulation by mediating cellular zinc uptake into activated lymphocytes. Regulates the zinc influx necessary for proper meiotic progression to metaphase II (MII) that allows the oocyte-to-egg transition. This Homo sapiens (Human) protein is Zinc transporter ZIP6.